Reading from the N-terminus, the 586-residue chain is MFKVIKCNELNEKLINKKVEINAWVKKIRHHGKFTFLDIRDRYEKAQVLITEEHLLKIVEKIKLEYCIKIQGLLIKRPSNMINANMTTGYFEILAKNIEIISKCNELPFMIEDDNNASENSKLKYRYLDLRRDSLKNKIILRCQATHLIRNFLVKRKFLELETPTFVKSTPEGARDFVIPSRIHKGSFYALPQSPQLYKQLIMIAGFDKYFQIARCYRDEDSRGDRQPEFTQLDLEMSFVKKENIFKLIENMLFSIFKNCLNIKLSKKFKKITYKTAMNKYGSDKPDTRFELTLQDISRNLKNSEFNVFKDILNNKGSIKTLIVKDKADTFSRAKINNLEEIAKLYKTQGLYFTKIENNKFSGGIAKFLKTEEQQLIKAYSLENNDIIFFIANNKWEIACKAMGQIRIKIANDLGLIDENKFEFLWVYDFPLFEYDENTKTYIPAHHMFSIPKKRYISNLEKNPNKAIGEIYDLVLNGVELGSGSIRIHNKELQQRIFNIIGFQKEKSEDRFGFFLKALEYGAPNHGGIAIGIDRLIMLMTKSTSIKDVILFPKNSFAASPLDNSPSKISNEQLKELGINIAPDDT.

E172 is a binding site for L-aspartate. The aspartate stretch occupies residues 196–199 (QLYK). R218 is an L-aspartate binding site. ATP-binding positions include 218–220 (RDE) and Q227. H446 serves as a coordination point for L-aspartate. Position 480 (E480) interacts with ATP. An L-aspartate-binding site is contributed by R487. 532 to 535 (GIDR) contacts ATP.

It belongs to the class-II aminoacyl-tRNA synthetase family. Type 1 subfamily. In terms of assembly, homodimer.

The protein localises to the cytoplasm. The catalysed reaction is tRNA(Asx) + L-aspartate + ATP = L-aspartyl-tRNA(Asx) + AMP + diphosphate. In terms of biological role, aspartyl-tRNA synthetase with relaxed tRNA specificity since it is able to aspartylate not only its cognate tRNA(Asp) but also tRNA(Asn). Reaction proceeds in two steps: L-aspartate is first activated by ATP to form Asp-AMP and then transferred to the acceptor end of tRNA(Asp/Asn). The chain is Aspartate--tRNA(Asp/Asn) ligase from Borreliella afzelii (strain PKo) (Borrelia afzelii).